Here is a 959-residue protein sequence, read N- to C-terminus: Probable serine/threonine-protein kinase DDB_G0291664 (959 aa).

Positions 154 to 213 (QQQQQQQLTPPPSPPLLPIPQPPAQNEEQQLTQPPSIPPPQQKQIKIQKSDRGTQVKSIT) are disordered. Residues 162 to 176 (TPPPSPPLLPIPQPP) show a composition bias toward pro residues. 2 ANK repeats span residues 294 to 324 (KGET…CMGI) and 333 to 362 (LNKN…PLKM). In terms of domain architecture, Protein kinase spans 482 to 762 (IDFHTQIGSA…EVGIIETEFL (281 aa)). ATP is bound by residues 488 to 496 (IGSAGNASV) and K509. D610 serves as the catalytic Proton acceptor. The disordered stretch occupies residues 904 to 959 (NNINNNNNNNNNCNNSKKFKTTSESTSALGSDASSSSSPSSSSPSPKYSASIYHHQ).

The protein belongs to the protein kinase superfamily. Ser/Thr protein kinase family.

The catalysed reaction is L-seryl-[protein] + ATP = O-phospho-L-seryl-[protein] + ADP + H(+). It catalyses the reaction L-threonyl-[protein] + ATP = O-phospho-L-threonyl-[protein] + ADP + H(+). This chain is Probable serine/threonine-protein kinase DDB_G0291664, found in Dictyostelium discoideum (Social amoeba).